The sequence spans 922 residues: Cell cycle and apoptosis regulator protein 2 (922 aa).

The disordered stretch occupies residues 1 to 39; it reads MSQFKRQRINPLPGGRNFSGAASTSLLGPPPGLLTPPVA. At Thr-35 the chain carries Phosphothreonine. Residue Lys-112 is modified to N6-acetyllysine; by KAT8. Position 123 is an N6-methyllysine (Lys-123). Ser-124 bears the Phosphoserine mark. Disordered regions lie at residues 178 to 219, 280 to 307, 446 to 508, and 567 to 638; these read LNRF…KPRH, RIQV…PTYS, KATE…EPAV, and VSPP…RGEA. Arg-180 carries the omega-N-methylarginine modification. The span at 188–200 shows a compositional bias: basic and acidic residues; the sequence is GRLDQGRSDDYDS. Residue Lys-215 is modified to N6-acetyllysine; by KAT8. The segment covering 473 to 491 has biased composition (polar residues); that stretch reads QADTSKQNTETMEATTQQD. At Thr-483 the chain carries Phosphothreonine. Phosphoserine is present on Ser-568. Over residues 571-601 the composition is skewed to basic and acidic residues; that stretch reads EPEKEEAAKEDAVKEEEAVKEEAVKVSKDEV. The stretch at 573-596 forms a coiled coil; sequence EKEEAAKEDAVKEEEAVKEEAVKV. Lys-590 participates in a covalent cross-link: Glycyl lysine isopeptide (Lys-Gly) (interchain with G-Cter in SUMO2 and SUMO3); alternate. Lys-590 participates in a covalent cross-link: Glycyl lysine isopeptide (Lys-Gly) (interchain with G-Cter in SUMO2); alternate. The interval 609 to 669 is interaction with MCC; it reads ESDSPLKEDG…DEFAGAKLEE (61 aa). Phosphoserine is present on residues Ser-612, Ser-626, Ser-674, Ser-677, and Ser-680. Phosphotyrosine is present on Tyr-684. Phosphoserine occurs at positions 686 and 807. The segment at 703–922 is interaction with NR1D1; it reads DCLLAFVFFD…VEKEEPTPSN (220 aa). Residues 828-898 adopt a coiled-coil conformation; that stretch reads LENKIHTLEL…QDFRRRLTPL (71 aa). Thr-896 is subject to Phosphothreonine.

Component of the DBIRD complex. Interacts with ZNF326/ZIRD; the interaction is direct. Interacts (via N-terminus) with SIRT1, which inhibits the deacetylation of substrates. Interacts (via N-terminus) with SUV39H1; this interaction abolishes the interaction with SIRT1. Component of a nuclear receptor-mediated transcription complex composed of at least ZNF335, CCAR2 and EMSY; the complex stimulates the transcription of nuclear receptor target genes such as SOX9 and HOXA1. Within the complex interacts with EMSY and interacts with ZNF335 (via C-terminus). Components of this complex may associate with components of a histone methylation complex to form a complex at least composed of ZNF335, HCFC1, CCAR2, EMSY, MKI67, RBBP5, ASH2L and WDR5. Within this complex, interacts with ASH2L. Interacts with NR1D1. Interacts (via N-terminus) with ESR1 and ESR2. Interacts (via N-terminus) with HDAC3 (via C-terminus). Interacts with HDAC1 and MED2F. Interacts with MCC. Interacts (via N-terminus) with NR1H2 and NR1H3 in a ligand-independent manner. Interacts with CSNK2A1. Interacts (via N-terminus) with p53/TP53. Interacts (via N-terminus) with BRCA1 (via the BRCT domains). Interacts (via N-terminus) with CHEK2 (via protein kinase domain). Interacts with PSEM3. Interacts (via N-terminus) with PSIA3 and SENP1. The sumoylated form shows a preferential interaction with SIRT1 as compared to its unmodified form. Interacts with CECR2; may form part of the CERF-1 and/or CEF-5 ISWI chromatin remodeling complexes in embryonic stem cells. Post-translationally, acetylation at Lys-112 and Lys-215 by KAT8 prevents inhibitory binding to SIRT1 and increases its deacetylase activity. In terms of processing, genotoxic stress induces its sumoylation and sumoylation promotes the SIRT1-CCAR2 interaction which in turn inhibits SIRT1-mediated deacetylation of p53/TP53. Sumoylation leads to transcriptional activation of p53/TP53 by sequestering SIRT1 from p53/TP53. Desumoylated by SENP1.

The protein resides in the nucleus. Its subcellular location is the cytoplasm. The protein localises to the cytoskeleton. It localises to the spindle. In terms of biological role, core component of the DBIRD complex, a multiprotein complex that acts at the interface between core mRNP particles and RNA polymerase II (RNAPII) and integrates transcript elongation with the regulation of alternative splicing: the DBIRD complex affects local transcript elongation rates and alternative splicing of a large set of exons embedded in (A + T)-rich DNA regions. Inhibits SIRT1 deacetylase activity leading to increasing levels of p53/TP53 acetylation and p53-mediated apoptosis. Inhibits SUV39H1 methyltransferase activity. Mediates ligand-dependent transcriptional activation by nuclear hormone receptors. Plays a critical role in maintaining genomic stability and cellular integrity following UV-induced genotoxic stress. Regulates the circadian expression of the core clock components NR1D1 and BMAL1. Enhances the transcriptional repressor activity of NR1D1 through stabilization of NR1D1 protein levels by preventing its ubiquitination and subsequent degradation. Represses the ligand-dependent transcriptional activation function of ESR2. Acts as a regulator of PCK1 expression and gluconeogenesis by a mechanism that involves, at least in part, both NR1D1 and SIRT1. Negatively regulates the deacetylase activity of HDAC3 and can alter its subcellular localization. Positively regulates the beta-catenin pathway (canonical Wnt signaling pathway) and is required for MCC-mediated repression of the beta-catenin pathway. Represses ligand-dependent transcriptional activation function of NR1H2 and NR1H3 and inhibits the interaction of SIRT1 with NR1H3. Plays an important role in tumor suppression through p53/TP53 regulation; stabilizes p53/TP53 by affecting its interaction with ubiquitin ligase MDM2. Represses the transcriptional activator activity of BRCA1. Inhibits SIRT1 in a CHEK2 and PSEM3-dependent manner and inhibits the activity of CHEK2 in vitro. This is Cell cycle and apoptosis regulator protein 2 (Ccar2) from Mus musculus (Mouse).